The following is a 141-amino-acid chain: Small ribosomal subunit protein eS12 (141 aa).

It belongs to the eukaryotic ribosomal protein eS12 family. Component of the small ribosomal subunit. Mature ribosomes consist of a small (40S) and a large (60S) subunit. The 40S subunit contains about 32 different proteins and 1 molecule of RNA (18S). The 60S subunit contains about 42 different proteins and 3 molecules of RNA (28S, 5.8S and 5S).

The protein resides in the cytoplasm. Functionally, component of the ribosome, a large ribonucleoprotein complex responsible for the synthesis of proteins in the cell. The small ribosomal subunit (SSU) binds messenger RNAs (mRNAs) and translates the encoded message by selecting cognate aminoacyl-transfer RNA (tRNA) molecules. The large subunit (LSU) contains the ribosomal catalytic site termed the peptidyl transferase center (PTC), which catalyzes the formation of peptide bonds, thereby polymerizing the amino acids delivered by tRNAs into a polypeptide chain. The nascent polypeptides leave the ribosome through a tunnel in the LSU and interact with protein factors that function in enzymatic processing, targeting, and the membrane insertion of nascent chains at the exit of the ribosomal tunnel. The sequence is that of Small ribosomal subunit protein eS12 from Plasmodium falciparum (isolate 3D7).